The following is a 239-amino-acid chain: Ribonuclease PH (239 aa).

Phosphate is bound by residues Arg87 and 125 to 127 (GTR).

This sequence belongs to the RNase PH family. In terms of assembly, homohexameric ring arranged as a trimer of dimers.

The catalysed reaction is tRNA(n+1) + phosphate = tRNA(n) + a ribonucleoside 5'-diphosphate. Phosphorolytic 3'-5' exoribonuclease that plays an important role in tRNA 3'-end maturation. Removes nucleotide residues following the 3'-CCA terminus of tRNAs; can also add nucleotides to the ends of RNA molecules by using nucleoside diphosphates as substrates, but this may not be physiologically important. Probably plays a role in initiation of 16S rRNA degradation (leading to ribosome degradation) during starvation. The polypeptide is Ribonuclease PH (Saccharophagus degradans (strain 2-40 / ATCC 43961 / DSM 17024)).